Consider the following 1055-residue polypeptide: Bifunctional fucokinase/GDP-fucose pyrophosphorylase (1055 aa).

The interval 34–565 (WDAIVLTAAS…SSQRVSLEEL (532 aa)) is GDP-fucose pyrophosphorylase. Residues 693 to 1055 (GKSHSENHIS…VKVYNWSICI (363 aa)) are L-fucokinase. 826-836 (PRGSGLGTSSI) is an ATP binding site.

Belongs to the GHMP kinase family. Mn(2+) is required as a cofactor. Mg(2+) serves as cofactor. In terms of tissue distribution, ubiquitous. Highest expression in flower buds.

It catalyses the reaction L-fucose + ATP = beta-L-fucose 1-phosphate + ADP + H(+). The catalysed reaction is beta-L-fucose 1-phosphate + GTP + H(+) = GDP-beta-L-fucose + diphosphate. In terms of biological role, bifunctional enzyme involved in the salvage pathway which converts free L-fucose to GDP-L-fucose. Catalyzes two successive reactions, the ATP-dependent phosphorylation of L-fucose to L-fucose 1-phosphate, and its guanylylation to GDP-L-fucose. The sugar-1-kinase activity has a strict substrate specificity for L-fucose and ATP. The pyrophosphorylase activity has a strict substrate specificity for L-fucose 1-phosphate and GTP. This Arabidopsis thaliana (Mouse-ear cress) protein is Bifunctional fucokinase/GDP-fucose pyrophosphorylase (FKGP).